Here is a 410-residue protein sequence, read N- to C-terminus: Methylamine dehydrogenase heavy chain (410 aa).

The first 35 residues, 1–35 (MTHAYTKVRQALCYGSATLGAAALAALIAAGSAAA), serve as a signal peptide directing secretion.

Belongs to the aromatic amine dehydrogenase heavy chain family. As to quaternary structure, tetramer of two light and two heavy chains.

Its subcellular location is the periplasm. The catalysed reaction is 2 oxidized [amicyanin] + methylamine + H2O = 2 reduced [amicyanin] + formaldehyde + NH4(+) + 2 H(+). Functionally, methylamine dehydrogenase carries out the oxidation of methylamine. Electrons are passed from methylamine dehydrogenase to amicyanin. The sequence is that of Methylamine dehydrogenase heavy chain (mauB) from Methylorubrum extorquens (strain ATCC 14718 / DSM 1338 / JCM 2805 / NCIMB 9133 / AM1) (Methylobacterium extorquens).